Reading from the N-terminus, the 922-residue chain is ATP-dependent helicase fft3 (922 aa).

Disordered stretches follow at residues 139 to 177 and 198 to 224; these read EPKMPSYMDDEEASDSLPLSLSSQSLSSQVTNQKPAPHR and PLSSRKTYEPEADDDSNDDMYSDDDSN. The segment covering 153-166 has biased composition (low complexity); the sequence is DSLPLSLSSQSLSS. Acidic residues predominate over residues 207 to 223; that stretch reads PEADDDSNDDMYSDDDS. Phosphoserine occurs at positions 213 and 219. Residues 399–567 enclose the Helicase ATP-binding domain; sequence YLLYELKLAG…ISLLAFILPH (169 aa). An ATP-binding site is contributed by 412–419; the sequence is DEMGLGKT. The DEGH box signature appears at 518-521; the sequence is DEGH. A Phosphoserine modification is found at S617. Positions 765-922 constitute a Helicase C-terminal domain; the sequence is KLKKLLTNAV…ETVEAEDDDD (158 aa).

The protein belongs to the SNF2/RAD54 helicase family. In terms of assembly, interacts with the GDP-bound form of spi1.

Its subcellular location is the nucleus. It is found in the chromosome. It catalyses the reaction ATP + H2O = ADP + phosphate + H(+). Functionally, DNA helicase that possesses intrinsic ATP-dependent nucleosome-remodeling activity and is required for heterochromatin organization. Required for maintaining a heterochromatin chromatin structure at centromeres and subtelomeres by protecting these regions from euchromatin assembly. Enhances the nucleotide exchange activity of the pim1 guanine nucleotide exchange factor and abolishes histone-H3-mediated RanGAP inhibition. Involved in the construction of the centromeres. The sequence is that of ATP-dependent helicase fft3 (fft3) from Schizosaccharomyces pombe (strain 972 / ATCC 24843) (Fission yeast).